We begin with the raw amino-acid sequence, 147 residues long: Ribosomal RNA large subunit methyltransferase H (147 aa).

S-adenosyl-L-methionine contacts are provided by residues L64, G96, and 115–120 (FSKMTF).

Belongs to the RNA methyltransferase RlmH family. Homodimer.

The protein localises to the cytoplasm. The enzyme catalyses pseudouridine(1915) in 23S rRNA + S-adenosyl-L-methionine = N(3)-methylpseudouridine(1915) in 23S rRNA + S-adenosyl-L-homocysteine + H(+). Specifically methylates the pseudouridine at position 1915 (m3Psi1915) in 23S rRNA. The polypeptide is Ribosomal RNA large subunit methyltransferase H (Acholeplasma laidlawii (strain PG-8A)).